The following is a 220-amino-acid chain: Thiopurine S-methyltransferase (220 aa).

4 residues coordinate S-adenosyl-L-methionine: Trp10, Leu45, Glu66, and Arg123.

The protein belongs to the class I-like SAM-binding methyltransferase superfamily. TPMT family.

The protein localises to the cytoplasm. It catalyses the reaction S-adenosyl-L-methionine + a thiopurine = S-adenosyl-L-homocysteine + a thiopurine S-methylether.. This Nitrosospira multiformis (strain ATCC 25196 / NCIMB 11849 / C 71) protein is Thiopurine S-methyltransferase.